The following is a 781-amino-acid chain: Catenin beta-1 (781 aa).

A2 bears the N-acetylalanine mark. The segment at 2–23 is interaction with VCL; sequence ATQADLMELDMAMEPDRKAAVS. Phosphoserine; by GSK3-beta; alternate is present on S23. Residue S23 is glycosylated (O-linked (GlcNAc) serine; alternate). At S29 the chain carries Phosphoserine; by GSK3-beta. S33 and S37 each carry phosphoserine; by GSK3-beta and HIPK2. The interval 34 to 56 is disordered; sequence GIHSGATTTAPSLSGKGNPEEED. T41 carries the post-translational modification Phosphothreonine; by GSK3-beta. S45 is subject to Phosphoserine. K49 is subject to N6-acetyllysine. Y64 bears the Phosphotyrosine; by PTK6 mark. Position 142 is a phosphotyrosine; by FYN and PTK6 (Y142). ARM repeat units follow at residues 151 to 191, 193 to 234, 235 to 276, 277 to 318, 319 to 360, 361 to 389, 400 to 441, 442 to 484, 489 to 530, 531 to 571, 594 to 636, and 637 to 666; these read RAIP…IMRS, QMVS…IFKS, GGIP…VRLA, GGLQ…ILAS, GGPQ…IVEA, GGMQ…RNLS, GLLG…VCQV, GGIE…AQNA, YGLP…LREQ, GAIP…EIVE, NTIP…AEGA, and TAPL…SEDK. Positions 156-178 are interaction with BCL9; sequence LTKLLNDEDQVVVNKAAVMVHQL. Residue S191 is modified to Phosphoserine; by CDK5. At S246 the chain carries Phosphoserine; by CDK5. A phosphotyrosine mark is found at Y331 and Y333. A Phosphoserine; by AMPK modification is found at S552. A Phosphothreonine modification is found at T556. C619 is modified (S-nitrosocysteine). S675 is modified (phosphoserine). The segment at 705-781 is disordered; that stretch reads EPLGYRQDDP…NQLAWFDTDL (77 aa). Basic and acidic residues predominate over residues 734–745; the sequence is MMEHEMGGHHPG. The interval 772-781 is interaction with SCRIB; the sequence is NQLAWFDTDL.

This sequence belongs to the beta-catenin family. Two separate complex-associated pools are found in the cytoplasm. The majority is present as component of an E-cadherin/ catenin adhesion complex composed of at least E-cadherin/CDH1 and beta-catenin/CTNNB1, and possibly alpha-catenin/CTNNA1; the complex is located to adherens junctions. The stable association of CTNNA1 is controversial as CTNNA1 was shown not to bind to F-actin when assembled in the complex. Alternatively, the CTNNA1-containing complex may be linked to F-actin by other proteins such as LIMA1. Another cytoplasmic pool is part of a large complex containing AXIN1, AXIN2, APC, CSNK1A1 and GSK3B that promotes phosphorylation on N-terminal Ser and Thr residues and ubiquitination of CTNNB1 via BTRC and its subsequent degradation by the proteasome. Wnt-dependent activation of DVL antagonizes the action of GSK3B. When GSK3B activity is inhibited the complex dissociates, CTNNB1 is dephosphorylated and is no longer targeted for destruction. The stabilized protein translocates to the nucleus, where it binds TCF/LEF-1 family members, BCL9, BCL9L and possibly also RUVBL1 and CHD8. Binds CTNNBIP and EP300. CTNNB1 forms a ternary complex with LEF1 and EP300 that is disrupted by CTNNBIP1 binding. Interacts with TAX1BP3 (via the PDZ domain); this interaction inhibits the transcriptional activity of CTNNB1. Interacts with AJAP1, BAIAP1, CARM1, CTNNA3, CXADR and PCDH11Y. Binds NHERF1. Interacts with GLIS2 and SLC30A9. Interacts with XIRP1 and MUC1. Interacts with PTPRU (via the cytoplasmic juxtamembrane domain) and with EMD. Interacts with SCRIB. Interacts with TNIK. Interacts with SESTD1 and TRPC4. Interacts directly with AXIN1; the interaction is regulated by CDK2 phosphorylation of AXIN1. Interacts with CAV1. Interacts with TRPV4. The TRPV4 and CTNNB1 complex can interact with CDH1. Interacts with VCL. Interacts with PTPRJ. Interacts with PKT7. Interacts with FAT1 (via the cytoplasmic domain). Interacts with NANOS1 and NDRG2. Interacts with NEK2, CDK2 and CDK5. Interacts with PTK6. Interacts with SOX7; this interaction may lead to proteasomal degradation of active CTNNB1 and thus inhibition of Wnt/beta-catenin-stimulated transcription. Identified in a complex with HINT1 and MITF. Interacts with FHIT. The CTNNB1 and TCF4 complex interacts with PML. Interacts with FERMT2. Identified in a complex with TCF4 and FERMT2. Interacts with RORA. May interact with P-cadherin/CDH3. Interacts with RAPGEF2. Interacts with RNF220. Interacts with CTNND2. Interacts (via the C-terminal region) with CBY1. The complex composed, at least, of APC, CTNNB1 and GSK3B interacts with JPT1; the interaction requires the inactive form of GSK3B (phosphorylated at 'Ser-9'). Interacts with DLG5. Interacts with FAM53B; promoting translocation to the nucleus. Interacts with TMEM170B. Interacts with AHI1. Interacts with GID8. Component of an cadherin:catenin adhesion complex composed of at least of CDH26, beta-catenin/CTNNB1, alpha-catenin/CTNNA1 and p120 catenin/CTNND1. Forms a complex comprising APPL1, RUVBL2, APPL2, HDAC1 and HDAC2. Interacts with IRF2BPL; mediates the ubiquitination and degradation of CTNNB1. Interacts with LMBR1L and AMFR. Interacts with LMBR1L. Interacts with SOX30; prevents interaction of CTNNB1 with TCF7L2/TCF4 and leads to inhibition of Wnt signaling. Interacts with SOX9; inhibiting CTNNB1 activity by competing with the binding sites of TCF/LEF within CTNNB1, thereby inhibiting the Wnt signaling. Interacts with SPN/CD43 cytoplasmic tail. Interacts (when phosphorylated at Tyr-333) with isoform M2 of PKM (PKM2); promoting transcription activation. Interacts with PKP2 (via HEAD domain). Interacts with CDH1. Interacts (when unphosphorylated) with FLYWCH1, perhaps preventing interaction of CTNNB1 with TCF4, and thereby regulating transcription activation; phosphorylation of CTNNB1 may inhibit the interaction. Interacts (via the central armadillo domains) with probable transcriptional regulator ADNP (via N-terminal region); interaction is direct and stabilizes CTNNB1 by modulating its phosphorylation by glycogen synthase kinase-3 beta GSK3B. Interacts with NR5A2. Interacts with DSG2; the interaction promotes localization of CTNNB1 at cell junctions thus reducing its nuclear localization and subsequent transcription of CTNNB1/TCF-target genes. Phosphorylation by GSK3B requires prior phosphorylation of Ser-45 by another kinase. Phosphorylation proceeds then from Thr-41 to Ser-33. Phosphorylated by NEK2. EGF stimulates tyrosine phosphorylation. Phosphorylated on Ser-33 and Ser-37 by HIPK2. This phosphorylation triggers proteasomal degradation. Phosphorylation at Ser-552 by AMPK promotes stabilization of the protein, enhancing TCF/LEF-mediated transcription. Phosphorylation on Ser-191 and Ser-246 by CDK5. Phosphorylation by CDK2 regulates insulin internalization. Phosphorylation by PTK6 at Tyr-64, Tyr-142, Tyr-331 and/or Tyr-333 with the predominant site at Tyr-64 is not essential for inhibition of transcriptional activity. Phosphorylation by SRC at Tyr-333 promotes interaction with isoform M2 of PKM (PKM2); promoting transcription activation. In terms of processing, ubiquitinated by the SCF(BTRC) E3 ligase complex when phosphorylated by GSK3B, leading to its degradation. Ubiquitinated by a E3 ubiquitin ligase complex containing UBE2D1, SIAH1, CACYBP/SIP, SKP1, APC and TBL1X, leading to its subsequent proteasomal degradation. Ubiquitinated and degraded following interaction with SOX9. Ubiquitinated via 'Lys-11'- and 'Lys-29'-linked ubiquitin chains by UBR5, leading to its stabilization. Post-translationally, S-nitrosylation at Cys-619 within adherens junctions promotes VEGF-induced, NO-dependent endothelial cell permeability by disrupting interaction with E-cadherin, thus mediating disassembly adherens junctions. O-glycosylation at Ser-23 decreases nuclear localization and transcriptional activity, and increases localization to the plasma membrane and interaction with E-cadherin CDH1. In terms of processing, deacetylated at Lys-49 by SIRT1.

Its subcellular location is the cytoplasm. It localises to the nucleus. The protein localises to the cytoskeleton. It is found in the cell junction. The protein resides in the adherens junction. Its subcellular location is the cell membrane. It localises to the microtubule organizing center. The protein localises to the centrosome. It is found in the spindle pole. The protein resides in the synapse. Its subcellular location is the cilium basal body. Key downstream component of the canonical Wnt signaling pathway. In the absence of Wnt, forms a complex with AXIN1, AXIN2, APC, CSNK1A1 and GSK3B that promotes phosphorylation on N-terminal Ser and Thr residues and ubiquitination of CTNNB1 via BTRC and its subsequent degradation by the proteasome. In the presence of Wnt ligand, CTNNB1 is not ubiquitinated and accumulates in the nucleus, where it acts as a coactivator for transcription factors of the TCF/LEF family, leading to activate Wnt responsive genes. Also acts as a coactivator for other transcription factors, such as NR5A2. Promotes epithelial to mesenchymal transition/mesenchymal to epithelial transition (EMT/MET) via driving transcription of CTNNB1/TCF-target genes. Involved in the regulation of cell adhesion, as component of an E-cadherin:catenin adhesion complex. Acts as a negative regulator of centrosome cohesion. Involved in the CDK2/PTPN6/CTNNB1/CEACAM1 pathway of insulin internalization. Blocks anoikis of malignant kidney and intestinal epithelial cells and promotes their anchorage-independent growth by down-regulating DAPK2. Disrupts PML function and PML-NB formation by inhibiting RANBP2-mediated sumoylation of PML. Promotes neurogenesis by maintaining sympathetic neuroblasts within the cell cycle. Involved in chondrocyte differentiation via interaction with SOX9: SOX9-binding competes with the binding sites of TCF/LEF within CTNNB1, thereby inhibiting the Wnt signaling. Acts as a positive regulator of odontoblast differentiation during mesenchymal tooth germ formation, via promoting the transcription of differentiation factors such as LEF1, BMP2 and BMP4. Activity is repressed in a MSX1-mediated manner at the bell stage of mesenchymal tooth germ formation which prevents premature differentiation of odontoblasts. This Bos taurus (Bovine) protein is Catenin beta-1.